The sequence spans 288 residues: Probable chromosome 1-partitioning protein ParB (288 aa).

It belongs to the ParB family.

In terms of biological role, involved in chromosome partition. Localize to both poles of the predivisional cell following completion of DNA replication. Binds to the DNA origin of replication. This is Probable chromosome 1-partitioning protein ParB (parB1) from Deinococcus radiodurans (strain ATCC 13939 / DSM 20539 / JCM 16871 / CCUG 27074 / LMG 4051 / NBRC 15346 / NCIMB 9279 / VKM B-1422 / R1).